The primary structure comprises 243 residues: Cell division protein FtsQ (243 aa).

The Cytoplasmic portion of the chain corresponds to 1 to 19; that stretch reads MKRYNAKRKTHRNLKSIKK. Residues 20–40 form a helical membrane-spanning segment; sequence LIPTVLALLAFVSLLAGIITL. At 41 to 243 the chain is on the periplasmic side; the sequence is HNPKTLPFRQ…SNGLAIQWKN (203 aa). The region spanning 46-115 is the POTRA domain; sequence LPFRQIKITV…NELEIQVEEQ (70 aa).

Belongs to the FtsQ/DivIB family. FtsQ subfamily. Part of a complex composed of FtsB, FtsL and FtsQ.

It localises to the cell inner membrane. Its function is as follows. Essential cell division protein. May link together the upstream cell division proteins, which are predominantly cytoplasmic, with the downstream cell division proteins, which are predominantly periplasmic. May control correct divisome assembly. The chain is Cell division protein FtsQ from Coxiella burnetii (strain RSA 493 / Nine Mile phase I).